The following is a 311-amino-acid chain: GTP cyclohydrolase MptA (311 aa).

Belongs to the GTP cyclohydrolase IV family. In terms of assembly, homodimer. Fe(2+) is required as a cofactor.

It carries out the reaction GTP + H2O = 7,8-dihydroneopterin 2',3'-cyclic phosphate + formate + diphosphate + H(+). The protein operates within cofactor biosynthesis; 5,6,7,8-tetrahydromethanopterin biosynthesis. Functionally, converts GTP to 7,8-dihydro-D-neopterin 2',3'-cyclic phosphate, the first intermediate in the biosynthesis of coenzyme methanopterin. This chain is GTP cyclohydrolase MptA, found in Halobacterium salinarum (strain ATCC 29341 / DSM 671 / R1).